The sequence spans 329 residues: GTPase Obg (329 aa).

One can recognise an Obg domain in the interval 1–159 (MQFIDQAIID…WSLQLELKLL (159 aa)). An OBG-type G domain is found at 160 to 328 (AEVGIIGLPN…LLSSIWNELG (169 aa)). ATP is bound by residues 166-173 (GLPNAGKS), 191-195 (FTTLI), 213-216 (DIPG), 280-283 (NKKE), and 309-311 (SAV). Residues Ser173 and Thr193 each contribute to the Mg(2+) site.

Belongs to the TRAFAC class OBG-HflX-like GTPase superfamily. OBG GTPase family. In terms of assembly, monomer. It depends on Mg(2+) as a cofactor.

It localises to the cytoplasm. In terms of biological role, an essential GTPase which binds GTP, GDP and possibly (p)ppGpp with moderate affinity, with high nucleotide exchange rates and a fairly low GTP hydrolysis rate. Plays a role in control of the cell cycle, stress response, ribosome biogenesis and in those bacteria that undergo differentiation, in morphogenesis control. This Prochlorococcus marinus (strain NATL2A) protein is GTPase Obg.